Here is a 593-residue protein sequence, read N- to C-terminus: Aspartate--tRNA ligase (593 aa).

E180 is an L-aspartate binding site. Residues Q204–K207 form an aspartate region. Residue R226 participates in L-aspartate binding. ATP-binding positions include R226–E228 and Q235. H453 is an L-aspartate binding site. E487 is a binding site for ATP. Position 494 (R494) interacts with L-aspartate. G539–R542 is an ATP binding site.

This sequence belongs to the class-II aminoacyl-tRNA synthetase family. Type 1 subfamily. As to quaternary structure, homodimer.

The protein resides in the cytoplasm. It carries out the reaction tRNA(Asp) + L-aspartate + ATP = L-aspartyl-tRNA(Asp) + AMP + diphosphate. In terms of biological role, catalyzes the attachment of L-aspartate to tRNA(Asp) in a two-step reaction: L-aspartate is first activated by ATP to form Asp-AMP and then transferred to the acceptor end of tRNA(Asp). The chain is Aspartate--tRNA ligase from Clostridium botulinum (strain Okra / Type B1).